The primary structure comprises 460 residues: Lipase member I (460 aa).

The signal sequence occupies residues 1-15 (MRVYIFLCLMCWVRS). A glycan (N-linked (GlcNAc...) asparagine) is linked at Asn-63. The active-site Nucleophile is Ser-159. Asp-183 acts as the Charge relay system in catalysis. A disulfide bridge links Cys-238 with Cys-251. The Charge relay system role is filled by His-253. Cystine bridges form between Cys-275/Cys-286 and Cys-289/Cys-297. Asn-396 carries an N-linked (GlcNAc...) asparagine glycan. A disulfide bond links Cys-436 and Cys-455.

Belongs to the AB hydrolase superfamily. Lipase family. In terms of assembly, interacts with heparin with a high affinity. As to expression, expressed in testis. Expressed exclusively at the connecting piece of the sperm.

Its subcellular location is the cell membrane. The protein localises to the secreted. It catalyses the reaction 1-hexadecanoyl-2-(9Z-octadecenoyl)-sn-glycero-3-phosphate + H2O = 2-(9Z-octadecenoyl)-sn-glycero-3-phosphate + hexadecanoate + H(+). Inhibited by sodium vanadate. Hydrolyzes specifically phosphatidic acid (PA) to produce 2-acyl lysophosphatidic acid (LPA; a potent bioactive lipid mediator) and fatty acid. Does not hydrolyze other phospholipids, like phosphatidylserine (PS), phosphatidylcholine (PC) and phosphatidylethanolamine (PE) or triacylglycerol (TG). The protein is Lipase member I (LIPI) of Homo sapiens (Human).